Here is a 465-residue protein sequence, read N- to C-terminus: Ribulose bisphosphate carboxylase large chain (465 aa).

At Lys-4 the chain carries N6,N6,N6-trimethyllysine. Residues Asn-113 and Thr-163 each coordinate substrate. Residue Lys-165 is the Proton acceptor of the active site. Residue Lys-167 coordinates substrate. The Mg(2+) site is built by Lys-191, Asp-193, and Glu-194. Lys-191 carries the N6-carboxylysine modification. The active-site Proton acceptor is the His-284. Substrate-binding residues include Arg-285, His-317, and Ser-369.

This sequence belongs to the RuBisCO large chain family. Type I subfamily. In terms of assembly, heterohexadecamer of 8 large chains and 8 small chains; disulfide-linked. The disulfide link is formed within the large subunit homodimers. It depends on Mg(2+) as a cofactor. Post-translationally, the disulfide bond which can form in the large chain dimeric partners within the hexadecamer appears to be associated with oxidative stress and protein turnover.

The protein resides in the plastid. It localises to the chloroplast. The catalysed reaction is 2 (2R)-3-phosphoglycerate + 2 H(+) = D-ribulose 1,5-bisphosphate + CO2 + H2O. The enzyme catalyses D-ribulose 1,5-bisphosphate + O2 = 2-phosphoglycolate + (2R)-3-phosphoglycerate + 2 H(+). Its function is as follows. RuBisCO catalyzes two reactions: the carboxylation of D-ribulose 1,5-bisphosphate, the primary event in carbon dioxide fixation, as well as the oxidative fragmentation of the pentose substrate in the photorespiration process. Both reactions occur simultaneously and in competition at the same active site. The sequence is that of Ribulose bisphosphate carboxylase large chain from Dillenia indica (Elephant apple).